Reading from the N-terminus, the 306-residue chain is Dihydroorotate dehydrogenase B (NAD(+)), catalytic subunit (306 aa).

FMN-binding positions include Ser22 and 46–47; that span reads KT. Substrate is bound by residues Lys46, 70-74, and Asn128; that span reads NSIGL. Asn128 serves as a coordination point for FMN. Cys131 serves as the catalytic Nucleophile. Lys164 contributes to the FMN binding site. Residue 191–192 coordinates substrate; sequence NT. FMN is bound by residues Gly216, 242–243, and 264–265; these read GG and GS.

The protein belongs to the dihydroorotate dehydrogenase family. Type 1 subfamily. Heterotetramer of 2 PyrK and 2 PyrD type B subunits. The cofactor is FMN.

The protein resides in the cytoplasm. The enzyme catalyses (S)-dihydroorotate + NAD(+) = orotate + NADH + H(+). The protein operates within pyrimidine metabolism; UMP biosynthesis via de novo pathway; orotate from (S)-dihydroorotate (NAD(+) route): step 1/1. In terms of biological role, catalyzes the conversion of dihydroorotate to orotate with NAD(+) as electron acceptor. This Endomicrobium trichonymphae protein is Dihydroorotate dehydrogenase B (NAD(+)), catalytic subunit (pyrD).